We begin with the raw amino-acid sequence, 523 residues long: 2-isopropylmalate synthase (523 aa).

Residues 5-267 (VIIFDTTLRD…HTRINHQEIW (263 aa)) enclose the Pyruvate carboxyltransferase domain. Mn(2+) is bound by residues aspartate 14, histidine 202, histidine 204, and asparagine 238. Residues 392-523 (RLEYFSVQSG…QNKEHNQETV (132 aa)) are regulatory domain.

The protein belongs to the alpha-IPM synthase/homocitrate synthase family. LeuA type 1 subfamily. In terms of assembly, homodimer. Mn(2+) serves as cofactor.

It localises to the cytoplasm. The enzyme catalyses 3-methyl-2-oxobutanoate + acetyl-CoA + H2O = (2S)-2-isopropylmalate + CoA + H(+). It functions in the pathway amino-acid biosynthesis; L-leucine biosynthesis; L-leucine from 3-methyl-2-oxobutanoate: step 1/4. Functionally, catalyzes the condensation of the acetyl group of acetyl-CoA with 3-methyl-2-oxobutanoate (2-ketoisovalerate) to form 3-carboxy-3-hydroxy-4-methylpentanoate (2-isopropylmalate). This chain is 2-isopropylmalate synthase, found in Cronobacter sakazakii (strain ATCC BAA-894) (Enterobacter sakazakii).